Here is a 592-residue protein sequence, read N- to C-terminus: Bifunctional purine biosynthesis protein ATIC (592 aa).

Met1 carries the N-acetylmethionine modification. The 145-residue stretch at 2 to 146 (APGQLALFSV…KNHARVTVVC (145 aa)) folds into the MGS-like domain. Positions 2–198 (APGQLALFSV…ISDYFRKQYS (197 aa)) are IMP cyclohydrolase. Residues 12–14 (SDK), 34–37 (SGGT), 64–67 (RVKT), 101–102 (CN), and 125–126 (DI) contribute to the IMP site. The active-site Proton donor/acceptor; for FAICAR cyclization activity is the Lys137. Lys199 carries the post-translational modification N6-acetyllysine. An AICAR formyltransferase region spans residues 199–592 (KGVSQMPLRY…AHTNLRLFHH (394 aa)). 5-amino-1-(5-phospho-beta-D-ribosyl)imidazole-4-carboxamide contacts are provided by residues 207-208 (RY), His267, Gly316, Asp339, Asn431, and Arg451. His267 serves as the catalytic Proton acceptor; for AICAR formyltransferase activity. Ile452 contributes to the (6R)-10-formyltetrahydrofolate binding site. Position 541 (Phe541) interacts with 5-amino-1-(5-phospho-beta-D-ribosyl)imidazole-4-carboxamide. (6R)-10-formyltetrahydrofolate-binding positions include Asp546 and 565-566 (SA). Arg588 serves as a coordination point for 5-amino-1-(5-phospho-beta-D-ribosyl)imidazole-4-carboxamide.

This sequence belongs to the PurH family. In terms of assembly, homodimer. Associates with internalized INSR complexes on Golgi/endosomal membranes. Interacts with INSR; ATIC together with PRKAA2/AMPK2 and HACD3/PTPLAD1 is proposed to be part of a signaling network regulating INSR autophosphorylation and endocytosis. Present in the heart, brain, placenta, lung, liver, skeletal muscle, kidney, pancreas.

It is found in the cytoplasm. It localises to the cytosol. It catalyses the reaction (6R)-10-formyltetrahydrofolate + 5-amino-1-(5-phospho-beta-D-ribosyl)imidazole-4-carboxamide = 5-formamido-1-(5-phospho-D-ribosyl)imidazole-4-carboxamide + (6S)-5,6,7,8-tetrahydrofolate. The enzyme catalyses 10-formyldihydrofolate + 5-amino-1-(5-phospho-beta-D-ribosyl)imidazole-4-carboxamide = 5-formamido-1-(5-phospho-D-ribosyl)imidazole-4-carboxamide + 7,8-dihydrofolate. The catalysed reaction is IMP + H2O = 5-formamido-1-(5-phospho-D-ribosyl)imidazole-4-carboxamide. It carries out the reaction 5-amino-1-(5-phospho-D-ribosyl)imidazole-4-thiocarboxamide + 10-formyldihydrofolate = 6-thio-IMP + 7,8-dihydrofolate + H2O. Its pathway is purine metabolism; IMP biosynthesis via de novo pathway; 5-formamido-1-(5-phospho-D-ribosyl)imidazole-4-carboxamide from 5-amino-1-(5-phospho-D-ribosyl)imidazole-4-carboxamide (10-formyl THF route): step 1/1. The protein operates within purine metabolism; IMP biosynthesis via de novo pathway; IMP from 5-formamido-1-(5-phospho-D-ribosyl)imidazole-4-carboxamide: step 1/1. Its activity is regulated as follows. AMP and XMP inhibit AICAR formyltransferase activity. AICAR formyltransferase activity is inhibited by N-(6-fluoro-1-oxo-1,2-dihydroisoquinolin-7-yl)-5- [(3R)-3-hydroxypyrrolidin-1-yl]thiophene-2-sulfonamide (LSN 3213128), which acts as a tumor suppression in cancer cell lines. Bifunctional enzyme that catalyzes the last two steps of purine biosynthesis. Acts as a transformylase that incorporates a formyl group to the AMP analog AICAR (5-amino-1-(5-phospho-beta-D-ribosyl)imidazole-4-carboxamide) to produce the intermediate formyl-AICAR (FAICAR). Can use both 10-formyldihydrofolate and 10-formyltetrahydrofolate as the formyl donor in this reaction. Also catalyzes the cyclization of FAICAR to inosine monophosphate (IMP). Is able to convert thio-AICAR to 6-mercaptopurine ribonucleotide, an inhibitor of purine biosynthesis used in the treatment of human leukemias. Promotes insulin receptor/INSR autophosphorylation and is involved in INSR internalization. The sequence is that of Bifunctional purine biosynthesis protein ATIC from Homo sapiens (Human).